Here is a 288-residue protein sequence, read N- to C-terminus: MEIKLEQLGYCYQKNSPFEKRALLDVNVSFDSGSYSAIIGHTGSGKSTLLQHLNALLMPTEGKITVGDREIVAGVKQKKLRDLRKKVGIVFQFPEAQLFEETVEKDICFGPMNFGVSEEDAKLRAKKVIYEVGLTEEILSRSPFELSGGQMRRVAIAGVLAMDPEVLVLDEPTAGLDPHGREEIMEMFYNLHKEKGLTTVLVTHSMEDAARYAEKIVLMKAGTVLKIGSPREIFAKPDELVDLGLSVPDVVRFQGLFERKFNVKLTKTCLTIAELTAEMAPYLAKGGA.

In terms of domain architecture, ABC transporter spans 3–246 (IKLEQLGYCY…PDELVDLGLS (244 aa)). Position 40–47 (40–47 (GHTGSGKS)) interacts with ATP.

It belongs to the ABC transporter superfamily. Energy-coupling factor EcfA family. In terms of assembly, forms a stable energy-coupling factor (ECF) transporter complex composed of 2 membrane-embedded substrate-binding proteins (S component), 2 ATP-binding proteins (A component) and 2 transmembrane proteins (T component).

The protein resides in the cell membrane. Functionally, ATP-binding (A) component of a common energy-coupling factor (ECF) ABC-transporter complex. Unlike classic ABC transporters this ECF transporter provides the energy necessary to transport a number of different substrates. This chain is Energy-coupling factor transporter ATP-binding protein EcfA2, found in Listeria innocua serovar 6a (strain ATCC BAA-680 / CLIP 11262).